The sequence spans 313 residues: Biotin synthase (313 aa).

In terms of domain architecture, Radical SAM core spans 37–263; the sequence is YYGKKVKLNM…INPTKEIRIA (227 aa). Residues cysteine 55, cysteine 59, and cysteine 62 each contribute to the [4Fe-4S] cluster site. Residues cysteine 98, cysteine 131, cysteine 191, and arginine 261 each contribute to the [2Fe-2S] cluster site.

The protein belongs to the radical SAM superfamily. Biotin synthase family. In terms of assembly, homodimer. [4Fe-4S] cluster serves as cofactor. [2Fe-2S] cluster is required as a cofactor.

The catalysed reaction is (4R,5S)-dethiobiotin + (sulfur carrier)-SH + 2 reduced [2Fe-2S]-[ferredoxin] + 2 S-adenosyl-L-methionine = (sulfur carrier)-H + biotin + 2 5'-deoxyadenosine + 2 L-methionine + 2 oxidized [2Fe-2S]-[ferredoxin]. It functions in the pathway cofactor biosynthesis; biotin biosynthesis; biotin from 7,8-diaminononanoate: step 2/2. Functionally, catalyzes the conversion of dethiobiotin (DTB) to biotin by the insertion of a sulfur atom into dethiobiotin via a radical-based mechanism. The polypeptide is Biotin synthase (Staphylococcus epidermidis (strain ATCC 12228 / FDA PCI 1200)).